We begin with the raw amino-acid sequence, 511 residues long: Histidine ammonia-lyase (511 aa).

Residues alanine 142 to glycine 144 constitute a cross-link (5-imidazolinone (Ala-Gly)). Residue serine 143 is modified to 2,3-didehydroalanine (Ser).

This sequence belongs to the PAL/histidase family. In terms of processing, contains an active site 4-methylidene-imidazol-5-one (MIO), which is formed autocatalytically by cyclization and dehydration of residues Ala-Ser-Gly.

It localises to the cytoplasm. It catalyses the reaction L-histidine = trans-urocanate + NH4(+). It participates in amino-acid degradation; L-histidine degradation into L-glutamate; N-formimidoyl-L-glutamate from L-histidine: step 1/3. This is Histidine ammonia-lyase from Brucella canis (strain ATCC 23365 / NCTC 10854 / RM-666).